We begin with the raw amino-acid sequence, 646 residues long: uncharacterized protein (646 aa).

Helical transmembrane passes span 20 to 42, 55 to 77, 97 to 115, 127 to 149, 159 to 181, 188 to 206, 216 to 238, and 251 to 273; these read ILSR…LYLL, FLAG…IHQV, LLHF…HYML, YTFD…FSYW, IAFV…FFKL, ILLG…LLLA, YGAV…YHLF, and WVTM…IGTA.

The protein localises to the cell membrane. This is an uncharacterized protein from Bacillus subtilis (strain 168).